A 400-amino-acid polypeptide reads, in one-letter code: MTDSLFPRLVLAKGREKSLLRRHPWIFSGGVARMEGKARSGETIDIVDHQGKWLARGAYSPSSQIRARVWTFDRNEAIDSAFFERRLQQAQTWRAWLAERDGLDSYRLIAGESDGLPGVTIDRFGNFFVLQLLSAGAEYQRAAIISALQNLFPDCAIYDRSDVAVRKKEGLELAQGPVVGELPPALLPITEHGMKLLVDIQGGHKTGYYLDQRDSRLATRRYVADKRVLNCFSYTGGFAVSALMGGCRQVTSVDTSQEALDVARQNVEINGLDLSKAEFVRDDVFKLLRKYRDQGEKFDVIVMDPPKFVENKSQLMGACRGYKDINMLAIQLLNPGGVLLTFSCSGLMTTDLFQKIIADAAIDAGRDVQFIEQFRQAADHPVIATYPEGLYLKGFACRVM.

Residues 6 to 84 (FPRLVLAKGR…NEAIDSAFFE (79 aa)) form the PUA domain.

It belongs to the methyltransferase superfamily. RlmI family.

Its subcellular location is the cytoplasm. It catalyses the reaction cytidine(1962) in 23S rRNA + S-adenosyl-L-methionine = 5-methylcytidine(1962) in 23S rRNA + S-adenosyl-L-homocysteine + H(+). Specifically methylates the cytosine at position 1962 (m5C1962) of 23S rRNA. This chain is Ribosomal RNA large subunit methyltransferase I, found in Klebsiella pneumoniae subsp. pneumoniae (strain ATCC 700721 / MGH 78578).